We begin with the raw amino-acid sequence, 60 residues long: Large ribosomal subunit protein bL33 (60 aa).

This sequence belongs to the bacterial ribosomal protein bL33 family.

The protein is Large ribosomal subunit protein bL33 of Chlorobium phaeovibrioides (strain DSM 265 / 1930) (Prosthecochloris vibrioformis (strain DSM 265)).